The sequence spans 201 residues: Small ribosomal subunit protein uS4c (201 aa).

The interval 15–43 is disordered; it reads LGALPGLTSKRPRPGSDLRNQSRSGKRSQ. The S4 RNA-binding domain occupies 89–150; sequence MRLDNILFRL…EQRSRALIQN (62 aa).

This sequence belongs to the universal ribosomal protein uS4 family. Part of the 30S ribosomal subunit. Contacts protein S5. The interaction surface between S4 and S5 is involved in control of translational fidelity.

It localises to the plastid. The protein resides in the chloroplast. Its function is as follows. One of the primary rRNA binding proteins, it binds directly to 16S rRNA where it nucleates assembly of the body of the 30S subunit. In terms of biological role, with S5 and S12 plays an important role in translational accuracy. The sequence is that of Small ribosomal subunit protein uS4c (rps4) from Liriodendron tulipifera (Tuliptree).